The chain runs to 1493 residues: Myosin-13 (1493 aa).

Residues 18-67 (KVGSIVWVQDPEEAWIDGEVVEVNGEDIKVQCTSGKTVVAKGSNTYPKDM) form the Myosin N-terminal SH3-like domain. In terms of domain architecture, Myosin motor spans 72-741 (SGVDDMTTLA…QMAELDDRRT (670 aa)). Residues 166-173 (GESGAGKT) and 219-227 (NNNSSRFGK) contribute to the ATP site. 4 actin-binding regions span residues 504–538 (LIEKKRGGIIALLDEACMFPRSTHKTFSQKLYETL), 540–563 (DNKYFSKPKLSRTDFTICHYAGDV), 598–622 (FPPLVEDANKQSKFSSIASQFKQQL), and 622–644 (LASLIEGLNTTEPHYIRCVKPNN). IQ domains follow at residues 744-773 (LGRAACIIQWKFRSYLTRQSFIMLRNAAIN), 767-796 (LRNAAINIQAVYRGQVARYRFENLRREAAA), 792-821 (REAAALKIQRALRIHLDRKRSYIEAVVTVQ), 813-842 (YIEAVVTVQSGLRGMAARVVLRRKTKATTV), 836-865 (KTKATTVIQSHCRRLRAELHYKKLKKAAIT), and 859-888 (LKKAAITTQSAWRARLARKELRKLKTDARD). The stretch at 889 to 1057 (TVVLQAAKSM…NFLKESVLTT (169 aa)) forms a coiled coil. Positions 1085 to 1114 (QLSGAEFTTPPRIQESGSDTKSRGSHIDPQ) are disordered. The segment covering 1102–1114 (SDTKSRGSHIDPQ) has biased composition (basic and acidic residues). In terms of domain architecture, Dilute spans 1161-1444 (DRLVQMIGSA…IASMTGVMTD (284 aa)).

The protein belongs to the TRAFAC class myosin-kinesin ATPase superfamily. Myosin family. Plant myosin class XI subfamily. In terms of assembly, homodimer.

Its function is as follows. Myosin heavy chain that is required for the cell cycle-regulated transport of various organelles and proteins for their segregation. Functions by binding with its tail domain to receptor proteins on organelles and exerting force with its N-terminal motor domain against actin filaments, thereby transporting its cargo along polarized actin cables. In Arabidopsis thaliana (Mouse-ear cress), this protein is Myosin-13 (XI-G).